The following is a 536-amino-acid chain: Phosphoenolpyruvate carboxykinase (ATP) (536 aa).

R61, Y195, and K201 together coordinate substrate. Residues K201, H220, and 236–244 (GLSGTGKTT) each bind ATP. K201 and H220 together coordinate Mn(2+). Residue D257 participates in Mn(2+) binding. E285, R322, and T447 together coordinate ATP. Residue R322 coordinates substrate.

The protein belongs to the phosphoenolpyruvate carboxykinase (ATP) family. Mn(2+) serves as cofactor.

It is found in the cytoplasm. It carries out the reaction oxaloacetate + ATP = phosphoenolpyruvate + ADP + CO2. The protein operates within carbohydrate biosynthesis; gluconeogenesis. In terms of biological role, involved in the gluconeogenesis. Catalyzes the conversion of oxaloacetate (OAA) to phosphoenolpyruvate (PEP) through direct phosphoryl transfer between the nucleoside triphosphate and OAA. The chain is Phosphoenolpyruvate carboxykinase (ATP) from Mesorhizobium japonicum (strain LMG 29417 / CECT 9101 / MAFF 303099) (Mesorhizobium loti (strain MAFF 303099)).